The primary structure comprises 133 residues: Heat shock protein 15 (133 aa).

The S4 RNA-binding domain maps to V9 to I71. Residues N105–E133 are disordered. A compositionally biased stretch (basic and acidic residues) spans H111–E133.

The protein belongs to the HSP15 family. Monomer.

In terms of biological role, involved in the recycling of free 50S ribosomal subunits that still carry a nascent chain. Binds RNA more specifically than DNA. Binds with very high affinity to the free 50S ribosomal subunit. Does not bind it when it is part of the 70S ribosome. This is Heat shock protein 15 (hslR) from Escherichia coli O157:H7.